The sequence spans 23 residues: GLWQKIKSAAGDLASGIVEGIKS.

As to expression, expressed by the skin parotoid and/or rostral glands.

Its subcellular location is the secreted. In terms of biological role, antibacterial peptide, that adopts an alpha helical conformation which can disrupt bacterial membranes. Each caerin displays a different antimicrobial specificity. The sequence is that of Caerin-4.1 from Ranoidea caerulea (Green tree frog).